The following is a 155-amino-acid chain: MPLSKTLVQKLQQAGMAIANNQPQIKFTPLSISDEKGKVALDLNIALVPNPKFDLMHSGLYKQFKDFSINFDVNKETAISLLSKFVPENQKQDLVYRMDELIAEGEANGIIVNTDKTVTLTLALENNDLKLNGKPIPEEQLKVVLFILVMGGFGR.

Positions Met-1–Ala-19 are cleaved as a signal peptide.

This is an uncharacterized protein from Haemophilus influenzae (strain ATCC 51907 / DSM 11121 / KW20 / Rd).